We begin with the raw amino-acid sequence, 506 residues long: Anaerobic nitric oxide reductase transcription regulator NorR (506 aa).

The residue at position 57 (D57) is a 4-aspartylphosphate. The Sigma-54 factor interaction domain occupies 187-416 (MIGLSPAMTQ…LEHAIHRAVV (230 aa)). ATP is bound by residues 215–222 (GETGTGKE) and 278–287 (ADNGTLFLDE). Residues 481–500 (WAASARALETDVANLHRLAK) constitute a DNA-binding region (H-T-H motif).

It participates in nitrogen metabolism; nitric oxide reduction. In terms of biological role, required for the expression of anaerobic nitric oxide (NO) reductase, acts as a transcriptional activator for at least the norVW operon. Activation also requires sigma-54. This chain is Anaerobic nitric oxide reductase transcription regulator NorR, found in Salmonella heidelberg (strain SL476).